Reading from the N-terminus, the 579-residue chain is MSEKHKKIEELRSQRWFAPDTIRAFAHRQRLQQIGLRREEFMGKPVIAILNTWSEMSPCHSHLRDRAEAVKRGVWAAGGFPVELPVQSVGEVMVKPTTMLYRNLLAMEAEELLRSLPIDGAVLLGGCDKSTPGLLMGALSMDLPVIYCPAGPMSNGQWRGVKTGAGTHTKKYWDERRLGLIDTVAWEELEGAMTRSIGTCNTVGTASTMTSIADAMGFTLPGASSIPAADGAHPRMASQCGSAIVDLVWRDRRPSTWLTDKHVANGVAVYMAMGGSTNAAIHLIAIARRAGIDLTLDQLAAAAAKIPVLLNLFPSGTALMEDYHFAGGLRALMRKIEPHLHLECEGATGQSWDSLLADAPCYDDDIIRSLDNPVVSLEQGATLALLRGNLCPDGAVMKSSAAEPRLRRHSGPALVFDDHETLSRMIDDPALEVTADTVLILRNAGPVGAPGMPEWGNLPIPKRLLEAGVRDLLRISDSRMSGTHYGSCVLHVAPEAAVGGPLALVRTGDIIDLDVAAGTLNMRVSDDELARRRAGHVPQHKTYGRSFAALYQQHVTQANEGCDFDFLQAGEAVPEPPIH.

The [4Fe-4S] cluster site is built by Cys-59, Cys-127, and Cys-200.

Belongs to the IlvD/Edd family. As to quaternary structure, homodimer. The cofactor is [4Fe-4S] cluster.

The catalysed reaction is 6-deoxy-6-sulfo-D-gluconate = 2-dehydro-3,6-dideoxy-6-sulfo-D-gluconate + H2O. Functionally, catalyzes the dehydration of 6-deoxy-6-sulfo-D-gluconate to 2-dehydro-3,6-dideoxy-6-sulfo-D-gluconate. Is involved in a degradation pathway of sulfoquinovose (SQ) that allows P.putida SQ1 to use SQ as the sole carbon and energy source for growth. This is 6-deoxy-6-sulfo-D-gluconate dehydratase from Pseudomonas putida (Arthrobacter siderocapsulatus).